We begin with the raw amino-acid sequence, 347 residues long: Violet-sensitive opsin (347 aa).

Residues 1–31 lie on the Extracellular side of the membrane; that stretch reads MLEEEDFYLFKNVSNVSPFDGPQYHIAPKWA. Residue Asn-12 is glycosylated (N-linked (GlcNAc...) asparagine). The chain crosses the membrane as a helical span at residues 32 to 56; the sequence is FTLQAIFMGMVFLIGTPLNFIVLLV. Over 57–68 the chain is Cytoplasmic; it reads TIKYKKLRQPLN. Residues 69–94 traverse the membrane as a helical segment; it reads YILVNITVGGFLMCIFSIFPVFVSSS. Residues 95–108 lie on the Extracellular side of the membrane; it reads QGYFFFGRIACSID. Cys-105 and Cys-182 are disulfide-bonded. The helical transmembrane segment at 109–128 threads the bilayer; it reads AFVGTLTGLVTGWSLAFLAF. Residues 129–147 are Cytoplasmic-facing; that stretch reads ERYIVICKPMGNFNFSSSH. The chain crosses the membrane as a helical span at residues 148–171; that stretch reads ALAVVICTWIIGIVVSVPPFLGWS. Residues 172–197 lie on the Extracellular side of the membrane; sequence RYMPEGLQCSCGPDWYTVGTKYRSEY. A helical membrane pass occupies residues 198–225; sequence YTWFIFIFCFVIPLSLICFSYGRLLGAL. Residues 226-247 lie on the Cytoplasmic side of the membrane; sequence RAVAAQQQESASTQKAEREVSR. Residues 248–271 traverse the membrane as a helical segment; sequence MVIFMVGSFCLCYVPYAAMAMYMV. Residues 272–279 lie on the Extracellular side of the membrane; the sequence is TNRNHGLD. Residues 280–304 traverse the membrane as a helical segment; it reads LRLVTIPAFFSKSSCVYNPIIYSFM. N6-(retinylidene)lysine is present on Lys-291. Residues 305–347 lie on the Cytoplasmic side of the membrane; that stretch reads NKQFRGCIMETVCGRPMSDDSSVSSTSQRTEVSTVSSSQVSPA. The interval 323–347 is disordered; the sequence is DDSSVSSTSQRTEVSTVSSSQVSPA.

This sequence belongs to the G-protein coupled receptor 1 family. Opsin subfamily. Post-translationally, phosphorylated on some or all of the serine and threonine residues present in the C-terminal region. The color pigments are found in the cone photoreceptor cells.

The protein resides in the membrane. Functionally, visual pigments are the light-absorbing molecules that mediate vision. They consist of an apoprotein, opsin, covalently linked to cis-retinal. This is Violet-sensitive opsin from Xenopus laevis (African clawed frog).